The sequence spans 527 residues: Bifunctional purine biosynthesis protein PurH (527 aa).

In terms of domain architecture, MGS-like spans alanine 8–valine 156.

It belongs to the PurH family.

It catalyses the reaction (6R)-10-formyltetrahydrofolate + 5-amino-1-(5-phospho-beta-D-ribosyl)imidazole-4-carboxamide = 5-formamido-1-(5-phospho-D-ribosyl)imidazole-4-carboxamide + (6S)-5,6,7,8-tetrahydrofolate. It carries out the reaction IMP + H2O = 5-formamido-1-(5-phospho-D-ribosyl)imidazole-4-carboxamide. Its pathway is purine metabolism; IMP biosynthesis via de novo pathway; 5-formamido-1-(5-phospho-D-ribosyl)imidazole-4-carboxamide from 5-amino-1-(5-phospho-D-ribosyl)imidazole-4-carboxamide (10-formyl THF route): step 1/1. It participates in purine metabolism; IMP biosynthesis via de novo pathway; IMP from 5-formamido-1-(5-phospho-D-ribosyl)imidazole-4-carboxamide: step 1/1. This Mycobacterium sp. (strain KMS) protein is Bifunctional purine biosynthesis protein PurH.